A 356-amino-acid chain; its full sequence is Protein RecA (356 aa).

ATP is bound at residue G68–T75.

This sequence belongs to the RecA family.

Its subcellular location is the cytoplasm. In terms of biological role, can catalyze the hydrolysis of ATP in the presence of single-stranded DNA, the ATP-dependent uptake of single-stranded DNA by duplex DNA, and the ATP-dependent hybridization of homologous single-stranded DNAs. It interacts with LexA causing its activation and leading to its autocatalytic cleavage. This is Protein RecA from Thermotoga petrophila (strain ATCC BAA-488 / DSM 13995 / JCM 10881 / RKU-1).